The following is a 109-amino-acid chain: Iron-sulfur cluster assembly protein CyaY (109 aa).

Belongs to the frataxin family.

Involved in iron-sulfur (Fe-S) cluster assembly. May act as a regulator of Fe-S biogenesis. The polypeptide is Iron-sulfur cluster assembly protein CyaY (Bordetella petrii (strain ATCC BAA-461 / DSM 12804 / CCUG 43448)).